The primary structure comprises 168 residues: MLLYKDVISGDELVSDAYDLKEVDDIVYEADCQMVTVKQGGDVDIGANPSAEDAEENAEEGTETVNNLVYSFRLSPTSFDKKSYMSYIKGYMKAIKARLQESNPERVPVFEKNAIGFVKKILANFKDYDFYIGESMDPDAMVVLMNYREDGITPYMIFFKDGLVSEKF.

Positions 1–168 constitute a TCTP domain; it reads MLLYKDVISG…FKDGLVSEKF (168 aa). The residue at position 78 (S78) is a Phosphoserine.

Belongs to the TCTP family.

Its subcellular location is the cytoplasm. Functionally, involved in calcium binding and microtubule stabilization. May be a guanine nucleotide-free chaperone (GFC). The sequence is that of Translationally-controlled tumor protein homolog (p23fy) from Schizosaccharomyces pombe (strain 972 / ATCC 24843) (Fission yeast).